A 383-amino-acid chain; its full sequence is Pantothenate kinase 1 (383 aa).

Belongs to the type II pantothenate kinase family. Highly expressed in leaves and developing seeds. Expressed in roots, stems and flowers.

It carries out the reaction (R)-pantothenate + ATP = (R)-4'-phosphopantothenate + ADP + H(+). Its pathway is cofactor biosynthesis; coenzyme A biosynthesis; CoA from (R)-pantothenate: step 1/5. Its activity is regulated as follows. Regulated by feedback inhibition by malonyl-CoA. Functionally, catalyzes the phosphorylation of pantothenate the first step in CoA biosynthesis. May play a role in the physiological regulation of the intracellular CoA concentration. Functionally redudant with PANK2. The chain is Pantothenate kinase 1 (PANK1) from Arabidopsis thaliana (Mouse-ear cress).